Reading from the N-terminus, the 788-residue chain is Protein HHLF1 (788 aa).

Disordered stretches follow at residues 1 to 82, 366 to 385, and 609 to 663; these read MAQR…NFWH, TGTA…ETEA, and IHKK…SRLP. A compositionally biased stretch (gly residues) spans 16 to 25; that stretch reads RGRGAGGPSG. The span at 26 to 56 shows a compositional bias: low complexity; it reads VGSSPPSSCVPMGAPSTAGTGASAAATTTPG. The RNA-binding stretch occupies residues 74–248; that stretch reads SGNNSNFWHG…HGAGEVVRLY (175 aa). The segment covering 650–659 has biased composition (basic and acidic residues); that stretch reads LRRDDEDWKP. The interaction with host EIF2AK2/PKR stretch occupies residues 671–788; sequence LDETFWVLGS…IATHYHYNAQ (118 aa).

Belongs to the herpesviridae US22 family. In terms of assembly, interacts with host EIF2AK2/PKR; this interaction retains EIF2AK2 to the host nucleus and prevents its activation. Interaction (via N-terminus) with host BECN1; this interaction inhibits host autophagy. Interacts with the viral DNA polymerase accessory subunit UL44. Interacts with host HSPA5.

It localises to the virion. The protein localises to the host cytoplasm. Its subcellular location is the host nucleus. Its function is as follows. Inhibits the establishment of the antiviral state and the integrated stress response (ISR) in the infected cell. Prevents the phosphorylation of the host eukaryotic translation initiation factor eIF-2alpha/EIF2S1 and thus the shutoff of viral and cellular protein synthesis by directly interacting with EIF2AK2/PKR. Prevents stress granule formation in response to eIF-2alpha/EIF2S1 phosphorylation, thereby rescuing viral replication and protein synthesis. Also inhibits host autophagy by interacting with host Beclin-1/BECN1. The chain is Protein HHLF1 (TRS1) from Homo sapiens (Human).